The sequence spans 138 residues: Large ribosomal subunit protein uL16c (138 aa).

This sequence belongs to the universal ribosomal protein uL16 family. Part of the 50S ribosomal subunit.

The protein resides in the plastid. It localises to the chloroplast. The protein is Large ribosomal subunit protein uL16c of Physcomitrium patens (Spreading-leaved earth moss).